A 717-amino-acid polypeptide reads, in one-letter code: Mitotic spindle assembly checkpoint protein MAD1 (717 aa).

N-acetylmethionine is present on methionine 1. At serine 16 the chain carries Phosphoserine. Residues glutamate 46–valine 631 are a coiled coil. An N6-acetyllysine; alternate modification is found at lysine 61. Lysine 61 is covalently cross-linked (Glycyl lysine isopeptide (Lys-Gly) (interchain with G-Cter in SUMO2); alternate). Residues lysine 79 to arginine 82 carry the Nuclear localization signal motif. Phosphoserine occurs at positions 214 and 428. A necessary for interaction with NEK2 region spans residues leucine 380–glutamine 532. Residues threonine 540–serine 551 form a necessary for interaction with MAD2L1 region.

The protein belongs to the MAD1 family. In terms of assembly, homodimer. Dimerizes via its N- and C- terminal regions. Heterodimerizes with MAD2L1 in order to form a tetrameric MAD1L1-MAD2L1 core complex. Interacts with the closed conformation form of MAD2L1 (C-MAD2) and open conformation form of MAD2L1 (O-MAD2). It is unclear whether MAD1L1 dimerization promotes the conversion of closed to open conformation of MAD2L1. Formation of a heterotetrameric core complex containing two molecules each of MAD1L1 and of MAD2L1 promotes binding of another molecule of MAD2L1 to each MAD2L1, resulting in a heterohexamer. Perturbation of the original MAD1L1-MAD2L1 structure by the spindle checkpoint may decrease MAD2L1 affinity for MAD1L1. CDC20 can compete with MAD1L1 for MAD2L1 binding, until the attachment and/or tension dampen the checkpoint signal, preventing further release of MAD2L1 on to CDC20. Also able to interact with the BUB1/BUB3 complex. Interacts with NEK2. Interacts with TTK. Interacts with TPR; the interactions occurs in a microtubule-independent manner. Interacts with IK. Interacts with the viral Tax protein. Interacts with PRAP1. Post-translationally, phosphorylated; by BUB1. Become hyperphosphorylated in late S through M phases or after mitotic spindle damage.

It is found in the nucleus. The protein resides in the chromosome. It localises to the centromere. The protein localises to the kinetochore. Its subcellular location is the nucleus envelope. It is found in the cytoplasm. The protein resides in the cytoskeleton. It localises to the microtubule organizing center. The protein localises to the centrosome. Its subcellular location is the spindle. It is found in the spindle pole. Component of the spindle-assembly checkpoint that prevents the onset of anaphase until all chromosomes are properly aligned at the metaphase plate. Forms a heterotetrameric complex with the closed conformation form of MAD2L1 (C-MAD2) at unattached kinetochores during prometaphase, recruits an open conformation of MAD2L1 (O-MAD2) and promotes the conversion of O-MAD2 to C-MAD2, which ensures mitotic checkpoint signaling. In Cricetulus griseus (Chinese hamster), this protein is Mitotic spindle assembly checkpoint protein MAD1 (MAD1L1).